The chain runs to 178 residues: Transmembrane protein 196 (178 aa).

Transmembrane regions (helical) follow at residues 11 to 31 (LLVL…VGAV), 47 to 67 (SSPV…ILCA), 73 to 93 (LVMI…ILNF), and 106 to 126 (LYPL…GCTL).

Expression is significantly decreased in lung cancer cells compared to normal lung tissue (at protein level).

Its subcellular location is the cytoplasm. The protein localises to the membrane. Its function is as follows. Acts as a tumor suppressor in lung cancer. Inhibits tumor cell growth by inhibiting cell proliferation and migration and promoting cell apoptosis. Inhibits metastasis of lung cancer by suppressing beta-catenin expression in the Wnt/beta-catenin signaling pathway. In Homo sapiens (Human), this protein is Transmembrane protein 196 (TMEM196).